A 180-amino-acid chain; its full sequence is Stathmin-3 (180 aa).

S-palmitoyl cysteine attachment occurs at residues Cys22 and Cys24. In terms of domain architecture, SLD spans 38-180 (GDMEVKQLDK…NKEQREEMSG (143 aa)). Phosphoserine occurs at positions 50, 60, 65, 68, 72, 73, and 81. A disordered region spans residues 59 to 82 (KSPSDLSPESPMLSSPPKKKDTSL). Residues 60–74 (SPSDLSPESPMLSSP) show a composition bias toward low complexity. Residues 76–179 (KKKDTSLEEL…RNKEQREEMS (104 aa)) are a coiled coil.

Belongs to the stathmin family. Interacts with STAT3. Interacts with CLU (secreted form); this interaction may act as an important modulator during neuronal differentiation. In terms of processing, N-terminal palmitoylation promotes specific anchoring to the cytosolic leaflet of Golgi membranes and subsequent vesicular trafficking along dendrites and axons. Neuronal Stathmins are substrates for palmitoyltransferases ZDHHC3, ZDHHC7 and ZDHHC15.

Its subcellular location is the golgi apparatus. It is found in the cell projection. The protein localises to the growth cone. It localises to the axon. The protein resides in the cytoplasm. Its subcellular location is the cytosol. In terms of biological role, exhibits microtubule-destabilizing activity, which is antagonized by STAT3. The sequence is that of Stathmin-3 (STMN3) from Macaca fascicularis (Crab-eating macaque).